We begin with the raw amino-acid sequence, 966 residues long: Calsyntenin-2 (966 aa).

Residues 1–20 (MLPGRLCLVPLLLALGVGSG) form the signal peptide. The Extracellular segment spans residues 21 to 835 (GGSGDGGDSR…SIQRSSVVPS (815 aa)). Cadherin domains are found at residues 46 to 162 (IETS…APTF) and 163 to 282 (KEPA…MPLF). N-linked (GlcNAc...) asparagine glycans are attached at residues N58 and N100. N-linked (GlcNAc...) asparagine glycosylation is found at N344, N376, N720, and N733. The helical transmembrane segment at 836–856 (IATVVIIISVCMLVFVVAMGV) threads the bilayer. The Cytoplasmic segment spans residues 857-966 (YRVRIAHQHF…NTAGVINIWK (110 aa)). Residues 890-966 (NPMEKHEGPG…NTAGVINIWK (77 aa)) form a disordered region. Over residues 901-916 (GEDETTEVEEEEEAEE) the composition is skewed to acidic residues. The span at 943–960 (QSGTSSQSPERSTWNTAG) shows a compositional bias: polar residues.

The protein belongs to the calsyntenin family. Proteolytically processed under normal cellular conditions. A primary zeta-cleavage generates a large extracellular (soluble) N-terminal domain (sAlc) and a short C-terminal transmembrane fragment (CTF1). A secondary cleavage catalyzed by gamma-secretase within the transmembrane domain releases the beta-Alc-gamma chain in the extracellular milieu and produces an intracellular fragment (AlcICD). This processing is strongly suppressed in the tripartite complex formed with APBA2 and APP, which seems to prevent the association with PSEN1. Restricted to the brain. In the cerebral cortex, found in the somas and neuropil of all layers. Expressed at highest levels in neurons of cortical layers 5 and 6 and, at lower levels, in neurons of the upper layers. Highly expressed in Purkinje cells. Also found in a few scattered interneurons throughout the granule cell layer and occasionally in neurons in the molecular layer (at protein level). Present throughout all cortical layers, highest levels in GABAergic neurons (based on morphology and distribution pattern).

The protein resides in the postsynaptic cell membrane. It is found in the endoplasmic reticulum membrane. Its subcellular location is the golgi apparatus membrane. The protein localises to the cell projection. It localises to the dendrite. Postsynaptic adhesion molecule that binds to presynaptic neurexins to mediate synapse formation, and which is involved in learning and memory. Promotes synapse development by acting as a cell adhesion molecule at the postsynaptic membrane, which associates with neurexin-alpha at the presynaptic membrane. The protein is Calsyntenin-2 of Mus musculus (Mouse).